The primary structure comprises 235 residues: Thiamine import ATP-binding protein ThiQ (235 aa).

The ABC transporter domain maps to 2 to 230 (LKLENLTYRY…TVPEAAILGM (229 aa)). Residue 32–39 (GPSGAGKS) coordinates ATP.

The protein belongs to the ABC transporter superfamily. Thiamine importer (TC 3.A.1.19.1) family. As to quaternary structure, the complex is composed of two ATP-binding proteins (ThiQ), two transmembrane proteins (ThiP) and a solute-binding protein (ThiB).

The protein localises to the cell inner membrane. The catalysed reaction is thiamine(out) + ATP + H2O = thiamine(in) + ADP + phosphate + H(+). In terms of biological role, part of the ABC transporter complex ThiBPQ involved in thiamine import. Responsible for energy coupling to the transport system. The protein is Thiamine import ATP-binding protein ThiQ of Photorhabdus laumondii subsp. laumondii (strain DSM 15139 / CIP 105565 / TT01) (Photorhabdus luminescens subsp. laumondii).